Here is a 616-residue protein sequence, read N- to C-terminus: Dihydroxy-acid dehydratase (616 aa).

Residue Asp-81 participates in Mg(2+) binding. Residue Cys-122 coordinates [2Fe-2S] cluster. Mg(2+) contacts are provided by Asp-123 and Lys-124. Lys-124 is modified (N6-carboxylysine). Cys-195 lines the [2Fe-2S] cluster pocket. Glu-491 lines the Mg(2+) pocket. The active-site Proton acceptor is the Ser-517.

It belongs to the IlvD/Edd family. In terms of assembly, homodimer. The cofactor is [2Fe-2S] cluster. Requires Mg(2+) as cofactor.

The catalysed reaction is (2R)-2,3-dihydroxy-3-methylbutanoate = 3-methyl-2-oxobutanoate + H2O. It catalyses the reaction (2R,3R)-2,3-dihydroxy-3-methylpentanoate = (S)-3-methyl-2-oxopentanoate + H2O. It functions in the pathway amino-acid biosynthesis; L-isoleucine biosynthesis; L-isoleucine from 2-oxobutanoate: step 3/4. Its pathway is amino-acid biosynthesis; L-valine biosynthesis; L-valine from pyruvate: step 3/4. In terms of biological role, functions in the biosynthesis of branched-chain amino acids. Catalyzes the dehydration of (2R,3R)-2,3-dihydroxy-3-methylpentanoate (2,3-dihydroxy-3-methylvalerate) into 2-oxo-3-methylpentanoate (2-oxo-3-methylvalerate) and of (2R)-2,3-dihydroxy-3-methylbutanoate (2,3-dihydroxyisovalerate) into 2-oxo-3-methylbutanoate (2-oxoisovalerate), the penultimate precursor to L-isoleucine and L-valine, respectively. The sequence is that of Dihydroxy-acid dehydratase from Escherichia coli O157:H7 (strain EC4115 / EHEC).